The following is a 155-amino-acid chain: Protein archease-like (155 aa).

Asp26, Asp154, and Ile155 together coordinate Ca(2+).

It belongs to the archease family.

In terms of biological role, component of the tRNA-splicing ligase complex required to facilitate the enzymatic turnover of catalytic subunit RtcB. This chain is Protein archease-like, found in Caenorhabditis briggsae.